The following is a 552-amino-acid chain: CTP synthase (552 aa).

Residues 1-265 (MTKFVFVTGG…DRIVCEKLAL (265 aa)) are amidoligase domain. S13 serves as a coordination point for CTP. UTP is bound at residue S13. Residues 14–19 (SLGKGI) and D71 contribute to the ATP site. 2 residues coordinate Mg(2+): D71 and E139. Residues 146–148 (DIE), 186–191 (KTKPTQ), and K222 contribute to the CTP site. Residues 186–191 (KTKPTQ) and K222 each bind UTP. Residues 290-545 (TIGMVGKYVD…IKAALAHKQA (256 aa)) enclose the Glutamine amidotransferase type-1 domain. G351 contacts L-glutamine. The active-site Nucleophile; for glutamine hydrolysis is the C378. L-glutamine contacts are provided by residues 379-382 (LGMQ), E402, and R468. Active-site residues include H518 and E520.

The protein belongs to the CTP synthase family. Homotetramer.

It catalyses the reaction UTP + L-glutamine + ATP + H2O = CTP + L-glutamate + ADP + phosphate + 2 H(+). The catalysed reaction is L-glutamine + H2O = L-glutamate + NH4(+). It carries out the reaction UTP + NH4(+) + ATP = CTP + ADP + phosphate + 2 H(+). It participates in pyrimidine metabolism; CTP biosynthesis via de novo pathway; CTP from UDP: step 2/2. Its activity is regulated as follows. Allosterically activated by GTP, when glutamine is the substrate; GTP has no effect on the reaction when ammonia is the substrate. The allosteric effector GTP functions by stabilizing the protein conformation that binds the tetrahedral intermediate(s) formed during glutamine hydrolysis. Inhibited by the product CTP, via allosteric rather than competitive inhibition. In terms of biological role, catalyzes the ATP-dependent amination of UTP to CTP with either L-glutamine or ammonia as the source of nitrogen. Regulates intracellular CTP levels through interactions with the four ribonucleotide triphosphates. This is CTP synthase from Herminiimonas arsenicoxydans.